Consider the following 946-residue polypeptide: ATP-dependent 6-phosphofructokinase subunit beta (946 aa).

The tract at residues 1 to 559 (MISIVNGTST…HLANFMAMNT (559 aa)) is N-terminal catalytic PFK domain 1. Residues Gly-192, 256–257 (RC), and 286–289 (GDGS) each bind ATP. Mg(2+) is bound at residue Asp-287. Residues 332 to 334 (SID), Arg-369, 376 to 378 (MGR), Glu-433, Arg-461, and 467 to 470 (HVQR) contribute to the beta-D-fructose 6-phosphate site. Residue Asp-334 is the Proton acceptor of the active site. The interval 560 to 573 (ANHEKPTLPREKRK) is interdomain linker. Residues 574–946 (KIAIINIGAP…LVGRTRLDKP (373 aa)) form a C-terminal regulatory PFK domain 2 region. Beta-D-fructose 2,6-bisphosphate contacts are provided by residues Arg-644, 702–706 (TISNN), 747–749 (QGG), Lys-833, 839–842 (HVQQ), and Arg-920.

This sequence belongs to the phosphofructokinase type A (PFKA) family. ATP-dependent PFK group I subfamily. Eukaryotic two domain clade 'E' sub-subfamily. Heterooctamer of 4 alpha and 4 beta chains. Requires Mg(2+) as cofactor.

The protein localises to the cytoplasm. The enzyme catalyses beta-D-fructose 6-phosphate + ATP = beta-D-fructose 1,6-bisphosphate + ADP + H(+). The protein operates within carbohydrate degradation; glycolysis; D-glyceraldehyde 3-phosphate and glycerone phosphate from D-glucose: step 3/4. With respect to regulation, allosterically activated by ADP, AMP, or fructose 2,6-bisphosphate, and allosterically inhibited by ATP or citrate. Catalyzes the phosphorylation of D-fructose 6-phosphate to fructose 1,6-bisphosphate by ATP, the first committing step of glycolysis. This is ATP-dependent 6-phosphofructokinase subunit beta (PFK2) from Candida albicans (Yeast).